The following is a 337-amino-acid chain: DNA-directed RNA polymerase subunit alpha (337 aa).

The tract at residues 1 to 233 (MVREEVVGST…DLFIPFLHAE (233 aa)) is alpha N-terminal domain (alpha-NTD). An alpha C-terminal domain (alpha-CTD) region spans residues 265-337 (KEIALKCIFI…FAIDLPKNKF (73 aa)).

This sequence belongs to the RNA polymerase alpha chain family. In terms of assembly, in plastids the minimal PEP RNA polymerase catalytic core is composed of four subunits: alpha, beta, beta', and beta''. When a (nuclear-encoded) sigma factor is associated with the core the holoenzyme is formed, which can initiate transcription.

It is found in the plastid. The protein resides in the chloroplast. The catalysed reaction is RNA(n) + a ribonucleoside 5'-triphosphate = RNA(n+1) + diphosphate. Functionally, DNA-dependent RNA polymerase catalyzes the transcription of DNA into RNA using the four ribonucleoside triphosphates as substrates. The protein is DNA-directed RNA polymerase subunit alpha of Acorus calamus (Sweet flag).